The chain runs to 535 residues: Alpha-1,3-mannosyl-glycoprotein 4-beta-N-acetylglucosaminyltransferase A (535 aa).

Residues 1–6 lie on the Cytoplasmic side of the membrane; sequence MRLRNG. Residues 7–27 form a helical; Signal-anchor for type II membrane protein membrane-spanning segment; that stretch reads TVATVLVFITTFLSLSWYTAW. Residues 28–54 are a coiled coil; sequence QNGKEKLIAYQREFHALKERLRIAEHR. The Lumenal portion of the chain corresponds to 28-535; sequence QNGKEKLIAY…NEIHIKKMTN (508 aa). N-linked (GlcNAc...) asparagine glycans are attached at residues Asn77, Asn85, and Asn458.

Belongs to the glycosyltransferase 54 family. It depends on a divalent metal cation as a cofactor. N-glycosylated.

The protein resides in the golgi apparatus membrane. Its subcellular location is the secreted. It catalyses the reaction N(4)-{beta-D-GlcNAc-(1-&gt;2)-alpha-D-Man-(1-&gt;3)-[beta-D-GlcNAc-(1-&gt;2)-alpha-D-Man-(1-&gt;6)]-beta-D-Man-(1-&gt;4)-beta-D-GlcNAc-(1-&gt;4)-beta-D-GlcNAc}-L-asparaginyl-[protein] + UDP-N-acetyl-alpha-D-glucosamine = N(4)-{beta-D-GlcNAc-(1-&gt;2)-[beta-D-GlcNAc-(1-&gt;4)]-alpha-D-Man-(1-&gt;3)-[beta-D-GlcNAc-(1-&gt;2)-alpha-D-Man-(1-&gt;6)]-beta-D-Man-(1-&gt;4)-beta-D-GlcNAc-(1-&gt;4)-beta-D-GlcNAc}-L-asparaginyl-[protein] + UDP + H(+). The enzyme catalyses an N(4)-{beta-D-GlcNAc-(1-&gt;2)-alpha-D-Man-(1-&gt;3)-[alpha-D-Man-(1-&gt;6)]-beta-D-Man-(1-&gt;4)-beta-D-GlcNAc-(1-&gt;4)-beta-D-GlcNAc}-L-asparaginyl-[protein] + UDP-N-acetyl-alpha-D-glucosamine = an N(4)-{beta-D-GlcNAc-(1-&gt;2)-[beta-D-GlcNAc-(1-&gt;4)]-alpha-D-Man-(1-&gt;3)-[alpha-D-Man-(1-&gt;6)]-beta-D-Man-(1-&gt;4)-beta-D-GlcNAc-(1-&gt;4)-beta-D-GlcNAc}-L-asparaginyl-[protein] + UDP + H(+). It carries out the reaction an N(4)-{beta-D-GlcNAc-(1-&gt;2)-alpha-D-Man-(1-&gt;3)-[beta-D-GlcNAc-(1-&gt;2)-[beta-D-GlcNAc-(1-&gt;6)]-alpha-D-Man-(1-&gt;6)]-beta-D-Man-(1-&gt;4)-beta-D-GlcNAc-(1-&gt;4)-beta-D-GlcNAc}-L-asparaginyl-[protein] + UDP-N-acetyl-alpha-D-glucosamine = an N(4)-{beta-D-GlcNAc-(1-&gt;2)-[beta-D-GlcNAc-(1-&gt;4)]-alpha-D-Man-(1-&gt;3)-[beta-D-GlcNAc-(1-&gt;2)-[beta-D-GlcNAc-(1-&gt;6)]-alpha-D-Man-(1-&gt;6)]-beta-D-Man-(1-&gt;4)-beta-D-GlcNAc-(1-&gt;4)-beta-D-GlcNAc}-L-asparaginyl-[protein] + UDP + H(+). The catalysed reaction is an N(4)-{beta-D-GlcNAc-(1-&gt;2)-alpha-D-Man-(1-&gt;3)-[beta-D-GlcNAc-(1-&gt;2)-alpha-D-Man-(1-&gt;6)]-beta-D-Man-(1-&gt;4)-beta-D-GlcNAc-(1-&gt;4)-[alpha-L-Fuc-(1-&gt;6)]-beta-D-GlcNAc}-L-asparaginyl-[protein] + UDP-N-acetyl-alpha-D-glucosamine = N(4)-{beta-D-GlcNAc-(1-&gt;2)-[beta-D-GlcNAc-(1-&gt;4)]-alpha-D-Man-(1-&gt;3)-[beta-D-GlcNAc-(1-&gt;2)-alpha-D-Man-(1-&gt;6)]-beta-D-Man-(1-&gt;4)-beta-D-GlcNAc-(1-&gt;4)-[alpha-L-Fuc-(1-&gt;6)]-beta-D-GlcNAc}-asparaginyl-[protein] + UDP + H(+). It catalyses the reaction an N(4)-{beta-D-GlcNAc-(1-&gt;2)-alpha-D-Man-(1-&gt;3)-[beta-D-Gal-(1-&gt;4)-beta-D-GlcNAc-(1-&gt;2)-alpha-D-Man-(1-&gt;6)]-beta-D-Man-(1-&gt;4)-beta-D-GlcNAc-(1-&gt;4)-beta-D-GlcNAc}-L-asparaginyl-[protein] + UDP-N-acetyl-alpha-D-glucosamine = an N(4)-{beta-D-GlcNAc-(1-&gt;2)-[beta-D-GlcNAc-(1-&gt;4)]-alpha-D-Man-(1-&gt;3)-[beta-D-Gal-(1-&gt;4)-beta-D-GlcNAc-(1-&gt;2)-alpha-D-Man-(1-&gt;6)]-beta-D-Man-(1-&gt;4)-beta-D-GlcNAc-(1-&gt;4)-beta-D-GlcNAc}-L-asparaginyl-[protein] + UDP + H(+). The enzyme catalyses N(4)-{beta-D-GlcNAc-(1-&gt;2)-alpha-D-Man-(1-&gt;3)-[alpha-D-Man-(1-&gt;3)-{alpha-D-Man-(1-&gt;6)}-alpha-D-Man-(1-&gt;6)]-beta-D-Man-(1-&gt;4)-beta-D-GlcNAc-(1-&gt;4)-beta-D-GlcNAc}-asparaginyl-[protein] + UDP-N-acetyl-alpha-D-glucosamine = N(4)-{beta-D-GlcNAc-(1-&gt;2)-[beta-D-GlcNAc-(1-&gt;4)]-alpha-D-Man-(1-&gt;3)-[alpha-D-Man-(1-&gt;3)-{alpha-D-Man-(1-&gt;6)}-alpha-D-Man-(1-&gt;6)]-beta-D-Man-(1-&gt;4)-beta-D-GlcNAc-(1-&gt;4)-beta-D-GlcNAc}-asparaginyl-[protein] + UDP + H(+). It carries out the reaction N(4)-{beta-D-GlcNAc-(1-&gt;2)-alpha-D-Man-(1-&gt;3)-beta-D-Man-(1-&gt;4)-beta-D-GlcNAc-(1-&gt;4)-beta-D-GlcNAc}-asparaginyl-[protein] + UDP-N-acetyl-alpha-D-glucosamine = N(4)-{beta-D-GlcNAc-(1-&gt;2)-[beta-D-GlcNAc-(1-&gt;4)]-alpha-D-Man-(1-&gt;3)-beta-D-Man-(1-&gt;4)-beta-D-GlcNAc-(1-&gt;4)-beta-D-GlcNAc}-asparaginyl-[protein] + UDP + H(+). Its pathway is protein modification; protein glycosylation. Inhibited by UDP. Its function is as follows. Glycosyltransferase that catalyze the transfer of GlcNAc from UDP-GlcNAc to the GlcNAcbeta1-2Manalpha1-3 arm of the core structure of N-linked glycans through a beta1-4 linkage and participates in the production of tri- and tetra-antennary N-linked sugar chains. Involved in glucose transport by mediating SLC2A2/GLUT2 glycosylation, thereby controlling cell-surface expression of SLC2A2 in pancreatic beta cells. The sequence is that of Alpha-1,3-mannosyl-glycoprotein 4-beta-N-acetylglucosaminyltransferase A from Gallus gallus (Chicken).